Here is a 400-residue protein sequence, read N- to C-terminus: Dual specificity mitogen-activated protein kinase kinase 2 (400 aa).

An N-acetylmethionine modification is found at Met-1. Ser-23 is subject to Phosphoserine. The Protein kinase domain maps to 72-369 (FERISELGAG…LKLLTNHAFI (298 aa)). ATP is bound by residues 78 to 86 (LGAGNGGVV) and Lys-101. The active-site Proton acceptor is the Asp-194. 2 positions are modified to phosphoserine; by RAF: Ser-222 and Ser-226. Positions 282 to 310 (PVVDGADGEPHSVSPRPRPPGRPISGHGM) are disordered. 3 positions are modified to phosphoserine: Ser-293, Ser-295, and Ser-306. Thr-394 and Thr-396 each carry phosphothreonine.

Belongs to the protein kinase superfamily. STE Ser/Thr protein kinase family. MAP kinase kinase subfamily. As to quaternary structure, interacts with MORG1. Interacts with SGK1. Interacts with KSR1. Interacts with KSR1 and BRAF; the interaction with KSR1 mediates KSR1-BRAF dimerization. Interacts with GLS. It depends on Mg(2+) as a cofactor. In terms of processing, MAPKK is itself dependent on Ser/Thr phosphorylation for activity catalyzed by MAP kinase kinase kinases (RAF or MEKK1). Phosphorylated by MAP2K1/MEK1. In terms of tissue distribution, expressed abundantly in the adult brain and muscle.

The protein localises to the cytoplasm. Its subcellular location is the membrane. The enzyme catalyses L-seryl-[protein] + ATP = O-phospho-L-seryl-[protein] + ADP + H(+). It carries out the reaction L-threonyl-[protein] + ATP = O-phospho-L-threonyl-[protein] + ADP + H(+). It catalyses the reaction L-tyrosyl-[protein] + ATP = O-phospho-L-tyrosyl-[protein] + ADP + H(+). Functionally, catalyzes the concomitant phosphorylation of a threonine and a tyrosine residue in a Thr-Glu-Tyr sequence located in MAP kinases. Activates the ERK1 and ERK2 MAP kinases. Activates BRAF in a KSR1 or KSR2-dependent manner; by binding to KSR1 or KSR2 releases the inhibitory intramolecular interaction between KSR1 or KSR2 protein kinase and N-terminal domains which promotes KSR1 or KSR2-BRAF dimerization and BRAF activation. This chain is Dual specificity mitogen-activated protein kinase kinase 2 (Map2k2), found in Rattus norvegicus (Rat).